Here is a 214-residue protein sequence, read N- to C-terminus: Homologous-pairing protein 2 homolog (214 aa).

A coiled-coil region spans residues Ser-79–Ala-147. The tract at residues Thr-115–Asp-179 is DNA-binding.

This sequence belongs to the HOP2 family.

It localises to the nucleus. In terms of biological role, plays an important role in meiotic recombination. Stimulates DMC1-mediated strand exchange required for pairing of homologous chromosomes during meiosis. The sequence is that of Homologous-pairing protein 2 homolog (psmc3ip) from Xenopus laevis (African clawed frog).